We begin with the raw amino-acid sequence, 206 residues long: Musculin (206 aa).

The segment at M1–R115 is disordered. Acidic residues predominate over residues S46 to E56. The Nuclear localization signal motif lies at K71–R76. Gly residues predominate over residues A78–K92. A compositionally biased stretch (low complexity) spans K93–A102. The bHLH domain occupies S107 to L159.

Efficient DNA binding requires dimerization with another bHLH protein. Binds DNA as a homodimer or a heterodimer. Forms a heterodimer with TCF3. Expressed in lymphoid tissues, B-cell lines and activated B-cells.

It is found in the nucleus. Transcription repressor capable of inhibiting the transactivation capability of TCF3/E47. May play a role in regulating antigen-dependent B-cell differentiation. The chain is Musculin (MSC) from Homo sapiens (Human).